Reading from the N-terminus, the 890-residue chain is DNA mismatch repair protein MutS (890 aa).

645–652 (GPNMAGKS) contributes to the ATP binding site.

It belongs to the DNA mismatch repair MutS family.

In terms of biological role, this protein is involved in the repair of mismatches in DNA. It is possible that it carries out the mismatch recognition step. This protein has a weak ATPase activity. The polypeptide is DNA mismatch repair protein MutS (Rickettsia conorii (strain ATCC VR-613 / Malish 7)).